We begin with the raw amino-acid sequence, 276 residues long: Replication protein A 32 kDa subunit-A (276 aa).

The segment covering 19–31 has biased composition (gly residues); that stretch reads GGGGYMQSPGGFG. Residues 19–47 are disordered; it reads GGGGYMQSPGGFGSPAPTQGEKKSRSRSQ. Residues 77-151 constitute a DNA-binding region (OB); it reads VTIVGIVRHA…KSVVAFKIAP (75 aa).

Belongs to the replication factor A protein 2 family. Component of the replication protein A complex (RPA/RP-A), a heterotrimeric complex composed of RPA1, RPA2 and RPA3. Differentially phosphorylated throughout the cell cycle, becoming phosphorylated at the G1-S transition and dephosphorylated in late mitosis. Phosphorylation increases upon replication fork stalling.

It is found in the nucleus. The protein localises to the PML body. Functionally, as part of the heterotrimeric replication protein A complex (RPA/RP-A), binds and stabilizes single-stranded DNA intermediates, that form during DNA replication or upon DNA stress. It prevents their reannealing and in parallel, recruits and activates different proteins and complexes involved in DNA metabolism. Thereby, it plays an essential role both in DNA replication and the cellular response to DNA damage. This is Replication protein A 32 kDa subunit-A (rpa2-a) from Xenopus laevis (African clawed frog).